Consider the following 132-residue polypeptide: Small ribosomal subunit protein uS11 (132 aa).

It belongs to the universal ribosomal protein uS11 family. In terms of assembly, part of the 30S ribosomal subunit. Interacts with proteins S7 and S18. Binds to IF-3.

Its function is as follows. Located on the platform of the 30S subunit, it bridges several disparate RNA helices of the 16S rRNA. Forms part of the Shine-Dalgarno cleft in the 70S ribosome. This chain is Small ribosomal subunit protein uS11, found in Clostridium botulinum (strain 657 / Type Ba4).